Consider the following 66-residue polypeptide: SPbeta prophage-derived uncharacterized protein YosK (66 aa).

This Bacillus subtilis (strain 168) protein is SPbeta prophage-derived uncharacterized protein YosK (yosK).